We begin with the raw amino-acid sequence, 268 residues long: Tetraspanin-5 (268 aa).

The Cytoplasmic segment spans residues 1–17 (MSGKHYKGPEVSCCIKY). The chain crosses the membrane as a helical span at residues 18–38 (FIFGFNVIFWFLGITFLGIGL). Topologically, residues 39–61 (WAWNEKGVLSNISSITDLGGFDP) are extracellular. N-linked (GlcNAc...) asparagine glycosylation occurs at Asn49. Residues 62–82 (VWLFLVVGGVMFILGFAGCIG) form a helical membrane-spanning segment. Topologically, residues 83–92 (ALRENTFLLK) are cytoplasmic. Residues 93–113 (FFSVFLGIIFFLELTAGVLAF) form a helical membrane-spanning segment. Residues 114–232 (VFKDWIKDQL…PQFEKWLQDN (119 aa)) are Extracellular-facing. Disulfide bonds link Cys153/Cys221, Cys154/Cys186, Cys170/Cys180, and Cys187/Cys200. 2 N-linked (GlcNAc...) asparagine glycosylation sites follow: Asn169 and Asn174. N-linked (GlcNAc...) asparagine glycosylation occurs at Asn232. Residues 233–253 (LTIVAGIFIGIALLQIFGICL) traverse the membrane as a helical segment. Residues 254-268 (AQNLVSDIEAVRASW) are Cytoplasmic-facing.

The protein belongs to the tetraspanin (TM4SF) family. In terms of assembly, interacts with ADAM10; the interaction influences ADAM10 substrate specificity, endocytosis and turnover. Palmitoylated.

The protein resides in the cell membrane. In terms of biological role, part of TspanC8 subgroup, composed of 6 members that interact with the transmembrane metalloprotease ADAM10. This interaction is required for ADAM10 exit from the endoplasmic reticulum and for enzymatic maturation and trafficking to the cell surface as well as substrate specificity. Different TspanC8/ADAM10 complexes have distinct substrates. Promotes ADAM10-mediated cleavage of CD44. Seems to regulate VE-cadherin expression in endothelial cells probably through interaction with ADAM10, promoting leukocyte transmigration. The sequence is that of Tetraspanin-5 from Homo sapiens (Human).